Here is a 134-residue protein sequence, read N- to C-terminus: Translation initiation factor 2 subunit beta (134 aa).

It belongs to the eIF-2-beta/eIF-5 family. As to quaternary structure, heterotrimer composed of an alpha, a beta and a gamma chain.

Functionally, eIF-2 functions in the early steps of protein synthesis by forming a ternary complex with GTP and initiator tRNA. The chain is Translation initiation factor 2 subunit beta from Pyrobaculum aerophilum (strain ATCC 51768 / DSM 7523 / JCM 9630 / CIP 104966 / NBRC 100827 / IM2).